A 211-amino-acid chain; its full sequence is N-(5'-phosphoribosyl)anthranilate isomerase (211 aa).

This sequence belongs to the TrpF family.

It catalyses the reaction N-(5-phospho-beta-D-ribosyl)anthranilate = 1-(2-carboxyphenylamino)-1-deoxy-D-ribulose 5-phosphate. Its pathway is amino-acid biosynthesis; L-tryptophan biosynthesis; L-tryptophan from chorismate: step 3/5. This Methanococcus maripaludis (strain C6 / ATCC BAA-1332) protein is N-(5'-phosphoribosyl)anthranilate isomerase.